A 76-amino-acid chain; its full sequence is DNA-directed RNA polymerase subunit Rpo5 (76 aa).

Belongs to the archaeal Rpo5/eukaryotic RPB5 RNA polymerase subunit family. As to quaternary structure, part of the RNA polymerase complex.

The protein localises to the cytoplasm. It catalyses the reaction RNA(n) + a ribonucleoside 5'-triphosphate = RNA(n+1) + diphosphate. Functionally, DNA-dependent RNA polymerase (RNAP) catalyzes the transcription of DNA into RNA using the four ribonucleoside triphosphates as substrates. This is DNA-directed RNA polymerase subunit Rpo5 from Archaeoglobus fulgidus (strain ATCC 49558 / DSM 4304 / JCM 9628 / NBRC 100126 / VC-16).